The following is a 369-amino-acid chain: Anhydro-N-acetylmuramic acid kinase (369 aa).

12-19 (GTSMDGVD) serves as a coordination point for ATP.

This sequence belongs to the anhydro-N-acetylmuramic acid kinase family.

The enzyme catalyses 1,6-anhydro-N-acetyl-beta-muramate + ATP + H2O = N-acetyl-D-muramate 6-phosphate + ADP + H(+). Its pathway is amino-sugar metabolism; 1,6-anhydro-N-acetylmuramate degradation. It participates in cell wall biogenesis; peptidoglycan recycling. In terms of biological role, catalyzes the specific phosphorylation of 1,6-anhydro-N-acetylmuramic acid (anhMurNAc) with the simultaneous cleavage of the 1,6-anhydro ring, generating MurNAc-6-P. Is required for the utilization of anhMurNAc either imported from the medium or derived from its own cell wall murein, and thus plays a role in cell wall recycling. This chain is Anhydro-N-acetylmuramic acid kinase, found in Shewanella woodyi (strain ATCC 51908 / MS32).